A 1809-amino-acid polypeptide reads, in one-letter code: Pyochelin synthetase PchF (1809 aa).

The condensation/cyclization stretch occupies residues 69-490 (FPLTPVQAAY…GLLRRLAQSP (422 aa)). The interval 520 to 915 (FAERALLTPD…GREDDQVKIR (396 aa)) is adenylation. The Carrier domain occupies 1407 to 1488 (APADELENAL…GLAERLRSAP (82 aa)). At Ser-1442 the chain carries O-(pantetheine 4'-phosphoryl)serine. The interval 1584-1797 (LGRRYAEALH…FDCLGEALAQ (214 aa)) is thioesterase.

The protein belongs to the NRP synthetase family. The cofactor is pantetheine 4'-phosphate.

It catalyses the reaction holo-[peptidyl-carrier protein] + L-cysteine + ATP = L-cysteinyl-[peptidyl-carrier protein] + AMP + diphosphate. Its pathway is siderophore biosynthesis. Functionally, involved in the biosynthesis of the siderophore pyochelin. Adenylates L-cysteine and loads it onto its peptidyl carrier domain via a thioester linkage to the phosphopanthetheine moiety. Then forms a peptide bond between the salicyl-thiazolinyl intermediate bound to the second carrier domain of PchE and the cysteine bound to its own peptidyl carrier domain to form the salicyl-thiazolinyl-cysteinyl-S-PCP2 intermediate. It subsequently cyclizes the C-terminal cysteine to form the second thiazoline heterocycle in the salicyl-thiazolinyl-thiazolinyl-S-PCP2 intermediate. When this intermediate is released by the action of a thioesterase, it produces the tricyclic acid hydroxyphenyl-thiazolyl-thiazolinyl-carboxylic acid (HPTT-COOH), an advanced intermediate containing the aryl-4,2-bis-heterocyclic skeleton of the bithiazoline class of siderophores. The polypeptide is Pyochelin synthetase PchF (Pseudomonas aeruginosa (strain ATCC 15692 / DSM 22644 / CIP 104116 / JCM 14847 / LMG 12228 / 1C / PRS 101 / PAO1)).